Consider the following 407-residue polypeptide: Pyridinium-3,5-bisthiocarboxylic acid mononucleotide nickel insertion protein (407 aa).

The protein belongs to the LarC family.

It catalyses the reaction Ni(II)-pyridinium-3,5-bisthiocarboxylate mononucleotide = pyridinium-3,5-bisthiocarboxylate mononucleotide + Ni(2+). Functionally, involved in the biosynthesis of a nickel-pincer cofactor ((SCS)Ni(II) pincer complex). Binds Ni(2+), and functions in nickel delivery to pyridinium-3,5-bisthiocarboxylic acid mononucleotide (P2TMN), to form the mature cofactor. Is thus probably required for the activation of nickel-pincer cofactor-dependent enzymes. The sequence is that of Pyridinium-3,5-bisthiocarboxylic acid mononucleotide nickel insertion protein from Acetivibrio thermocellus (strain ATCC 27405 / DSM 1237 / JCM 9322 / NBRC 103400 / NCIMB 10682 / NRRL B-4536 / VPI 7372) (Clostridium thermocellum).